Consider the following 156-residue polypeptide: Small ribosomal subunit protein uS7 (156 aa).

The protein belongs to the universal ribosomal protein uS7 family. In terms of assembly, part of the 30S ribosomal subunit. Contacts proteins S9 and S11.

One of the primary rRNA binding proteins, it binds directly to 16S rRNA where it nucleates assembly of the head domain of the 30S subunit. Is located at the subunit interface close to the decoding center, probably blocks exit of the E-site tRNA. This chain is Small ribosomal subunit protein uS7, found in Micrococcus luteus (strain ATCC 4698 / DSM 20030 / JCM 1464 / CCM 169 / CCUG 5858 / IAM 1056 / NBRC 3333 / NCIMB 9278 / NCTC 2665 / VKM Ac-2230) (Micrococcus lysodeikticus).